Consider the following 121-residue polypeptide: MQSNQLDYLPIFMQMGLAVGFVVLTIIGSSFLGPKRSSVNKDKNFESGIESIGNARVPFSVKYFLVAILFVLFDVEVIFLYPWAINFQELGMQGMIKMVIFMSLLLVGFFYIIKKKALEWD.

The next 3 helical transmembrane spans lie at 8 to 28 (YLPIFMQMGLAVGFVVLTIIG), 65 to 85 (LVAILFVLFDVEVIFLYPWAI), and 93 to 113 (QGMIKMVIFMSLLLVGFFYII).

The protein belongs to the complex I subunit 3 family. In terms of assembly, NDH-1 is composed of 14 different subunits. Subunits NuoA, H, J, K, L, M, N constitute the membrane sector of the complex.

It localises to the cell inner membrane. The enzyme catalyses a quinone + NADH + 5 H(+)(in) = a quinol + NAD(+) + 4 H(+)(out). NDH-1 shuttles electrons from NADH, via FMN and iron-sulfur (Fe-S) centers, to quinones in the respiratory chain. The immediate electron acceptor for the enzyme in this species is believed to be a menaquinone. Couples the redox reaction to proton translocation (for every two electrons transferred, four hydrogen ions are translocated across the cytoplasmic membrane), and thus conserves the redox energy in a proton gradient. The chain is NADH-quinone oxidoreductase subunit A from Flavobacterium psychrophilum (strain ATCC 49511 / DSM 21280 / CIP 103535 / JIP02/86).